The primary structure comprises 206 residues: Large ribosomal subunit protein uL4 (206 aa).

This sequence belongs to the universal ribosomal protein uL4 family. Part of the 50S ribosomal subunit.

Functionally, one of the primary rRNA binding proteins, this protein initially binds near the 5'-end of the 23S rRNA. It is important during the early stages of 50S assembly. It makes multiple contacts with different domains of the 23S rRNA in the assembled 50S subunit and ribosome. Its function is as follows. Forms part of the polypeptide exit tunnel. The sequence is that of Large ribosomal subunit protein uL4 from Nitratidesulfovibrio vulgaris (strain ATCC 29579 / DSM 644 / CCUG 34227 / NCIMB 8303 / VKM B-1760 / Hildenborough) (Desulfovibrio vulgaris).